Consider the following 355-residue polypeptide: Protein ATP1B4 (355 aa).

Residues 1–108 lie on the Nuclear side of the membrane; the sequence is MRRQLRSRRA…SLARTGQSLS (108 aa). A disordered region spans residues 35-76; that stretch reads EEEEAEEARVMVVPDLEEEEKEEEEEKEEDEKEEEESHHQDT. Over residues 49-68 the composition is skewed to acidic residues; the sequence is DLEEEEKEEEEEKEEDEKEE. Residues 109–129 form a helical; Signal-anchor for type II membrane protein membrane-spanning segment; it reads LLLVIYFFFYASLAAVITLCM. At 130–355 the chain is on the perinuclear space side; the sequence is YTLFLTISPY…RVIFTLNIET (226 aa).

Belongs to the X(+)/potassium ATPases subunit beta family. In terms of assembly, associates with a SMAD7-transcriptional complex. Interacts with SNW1 and TOR1AIP1. Does not associate with known Na,K-ATPase alpha-subunits. Expressed in skeletal muscle (at protein level). Expressed during postnatal development in skeletal muscle and heart.

It localises to the nucleus inner membrane. In terms of biological role, may act as a transcriptional coregulator during muscle development through its interaction with SNW1. Has lost its ancestral function as a Na,K-ATPase beta-subunit. In Sus scrofa (Pig), this protein is Protein ATP1B4 (ATP1B4).